The sequence spans 381 residues: tRNA-specific 2-thiouridylase MnmA (381 aa).

Residues 14–21 (AMSGGVDS) and Met-40 each bind ATP. Cys-108 (nucleophile) is an active-site residue. Cys-108 and Cys-205 are joined by a disulfide. Gly-132 is an ATP binding site. The interaction with tRNA stretch occupies residues 155–157 (KDQ). The Cysteine persulfide intermediate role is filled by Cys-205. Residues 309 to 310 (RY) form an interaction with tRNA region.

It belongs to the MnmA/TRMU family.

Its subcellular location is the cytoplasm. It carries out the reaction S-sulfanyl-L-cysteinyl-[protein] + uridine(34) in tRNA + AH2 + ATP = 2-thiouridine(34) in tRNA + L-cysteinyl-[protein] + A + AMP + diphosphate + H(+). Catalyzes the 2-thiolation of uridine at the wobble position (U34) of tRNA, leading to the formation of s(2)U34. In Deinococcus geothermalis (strain DSM 11300 / CIP 105573 / AG-3a), this protein is tRNA-specific 2-thiouridylase MnmA.